The primary structure comprises 551 residues: MAAKDVKFSRDARERMLRGVNILADAVKVTLGPKGRNVVIDKSFGAPRITKDGVTVAKEIELEDKFENMGAQMVREVASKTNDIAGDGTTTATVLAQSIVQEGHKAVAAGMNPMDLKRGIDLAVSEVVAALGKAAKKIKTSEEVAQVGTISANGDESVGKMIAEAMQKVGNEGVITVEEAKTAETELEVVEGMQFDRGYLSPYFVTNADKMVADLEDAYILLHEKKLSNLQAMLPVLEAVVQTSKPLLIISEDVEGEALATLVVNKLRGGLKIAAVKAPGFGDRRKAMLEDIAILTGGQVISEDLGIKLENVGLNMLGRAKKVSISKENTTIVDGAGKKAEIQGRVAQIKQQIEETTSDYDKEKLQERLAKLAGGVAVIRVGGATEVEVKEKKDRVDDALNATRAAVEEGIVAGGGVALLRASANIKAAGANADQAAGINIVRRALQAPARQIASNAGAEASIVAGKILENKGATFGYNAQTGEYGDMIAMGIVDPVKVVRTALQDAASVAGLLVTTEAMIAEAPKKESAGGGMPGGMGGGGMGGMGGMDF.

ATP is bound by residues 30–33 (TLGP), lysine 51, 87–91 (DGTTT), glycine 415, and aspartate 495.

Belongs to the chaperonin (HSP60) family. Forms a cylinder of 14 subunits composed of two heptameric rings stacked back-to-back. Interacts with the co-chaperonin GroES.

The protein localises to the cytoplasm. The enzyme catalyses ATP + H2O + a folded polypeptide = ADP + phosphate + an unfolded polypeptide.. In terms of biological role, together with its co-chaperonin GroES, plays an essential role in assisting protein folding. The GroEL-GroES system forms a nano-cage that allows encapsulation of the non-native substrate proteins and provides a physical environment optimized to promote and accelerate protein folding. The protein is Chaperonin GroEL 4 of Mesorhizobium japonicum (strain LMG 29417 / CECT 9101 / MAFF 303099) (Mesorhizobium loti (strain MAFF 303099)).